Here is a 251-residue protein sequence, read N- to C-terminus: Guanine nucleotide-binding protein subunit gamma 3 (251 aa).

The span at Met1–Gly10 shows a compositional bias: gly residues. The segment at Met1 to Leu44 is disordered. Residues Glu14–Ser28 show a composition bias toward low complexity. The span at Ser29 to Tyr41 shows a compositional bias: pro residues. The G protein gamma domain occupies Gly46–Cys126. A Cysteine methyl ester modification is found at Cys248. Residue Cys248 is the site of S-farnesyl cysteine attachment. Positions Leu249–Phe251 are cleaved as a propeptide — removed in mature form.

As to quaternary structure, g proteins are composed of 3 units, alpha, beta and gamma. Expressed in flowers and siliques.

Guanine nucleotide-binding proteins (G proteins) are involved as a modulator or transducer in various transmembrane signaling systems. The beta and gamma chains are required for the GTPase activity, for replacement of GDP by GTP, and for G protein-effector interaction. The chain is Guanine nucleotide-binding protein subunit gamma 3 (GG3) from Arabidopsis thaliana (Mouse-ear cress).